The following is a 765-amino-acid chain: Lysyl oxidase homolog 2 (765 aa).

A signal peptide spans 1 to 19 (MLVSHVFLLTLSLSVPSLG). SRCR domains are found at residues 49–150 (VRLA…VQCS), 179–293 (IRPI…VSCT), 317–416 (VRLR…VRCN), and 426–535 (VRLS…VSCV). 9 disulfide bridges follow: Cys-75/Cys-139, Cys-88/Cys-149, Cys-119/Cys-129, Cys-209/Cys-282, Cys-222/Cys-292, Cys-256/Cys-266, Cys-342/Cys-405, Cys-355/Cys-415, and Cys-386/Cys-396. Asn-279 carries an N-linked (GlcNAc...) asparagine glycan. Asn-446 is a glycosylation site (N-linked (GlcNAc...) asparagine). Disulfide bonds link Cys-455–Cys-521, Cys-468–Cys-534, and Cys-502–Cys-512. Residues 539 to 742 (PDLVLNAALV…WMYNCHIGGS (204 aa)) form a lysyl-oxidase like region. Residues Asp-540 and Leu-541 each contribute to the Ca(2+) site. 4 cysteine pairs are disulfide-bonded: Cys-564–Cys-616, Cys-570–Cys-686, Cys-648–Cys-664, and Cys-654–Cys-676. Cu cation is bound by residues His-617, His-619, and His-621. N-linked (GlcNAc...) asparagine glycosylation occurs at Asn-635. Residues 644 to 680 (KASFCLEDSECEADIQKQYVCANFGEQGITVGCWDLY) constitute a cross-link (lysine tyrosylquinone (Lys-Tyr)). Tyr-680 carries the post-translational modification 2',4',5'-topaquinone. Ca(2+) is bound by residues Glu-713, Asp-715, Asn-718, and Asn-719. Cysteines 723 and 737 form a disulfide.

The protein belongs to the lysyl oxidase family. Requires Cu cation as cofactor. Lysine tyrosylquinone residue serves as cofactor. Post-translationally, the lysine tyrosylquinone cross-link (LTQ) is generated by condensation of the epsilon-amino group of a lysine with a topaquinone produced by oxidation of tyrosine.

The protein localises to the secreted. It is found in the extracellular space. It localises to the extracellular matrix. Its subcellular location is the basement membrane. The protein resides in the nucleus. The protein localises to the chromosome. It is found in the endoplasmic reticulum. The enzyme catalyses L-lysyl-[protein] + O2 + H2O = (S)-2-amino-6-oxohexanoyl-[protein] + H2O2 + NH4(+). Functionally, mediates the post-translational oxidative deamination of lysine residues on target proteins leading to the formation of deaminated lysine (allysine). Acts as a transcription corepressor and specifically mediates deamination of trimethylated 'Lys-4' of histone H3 (H3K4me3), a specific tag for epigenetic transcriptional activation. Shows no activity against histone H3 when it is trimethylated on 'Lys-9' (H3K9me3) or 'Lys-27' (H3K27me3) or when 'Lys-4' is monomethylated (H3K4me1) or dimethylated (H3K4me2). Also mediates deamination of methylated TAF10, a member of the transcription factor IID (TFIID) complex, which induces release of TAF10 from promoters, leading to inhibition of TFIID-dependent transcription. LOXL2-mediated deamination of TAF10 results in transcriptional repression of genes required for embryonic stem cell pluripotency. Involved in epithelial to mesenchymal transition (EMT) and participates in repression of E-cadherin, probably by mediating deamination of histone H3. When secreted into the extracellular matrix, promotes cross-linking of extracellular matrix proteins by mediating oxidative deamination of peptidyl lysine residues in precursors to fibrous collagen and elastin. Acts as a regulator of sprouting angiogenesis, probably via collagen IV scaffolding. Acts as a regulator of chondrocyte differentiation, probably by regulating expression of factors that control chondrocyte differentiation. The polypeptide is Lysyl oxidase homolog 2 (loxl2) (Xenopus laevis (African clawed frog)).